Consider the following 474-residue polypeptide: Protein nucleotidyltransferase YdiU (474 aa).

ATP is bound by residues Gly89, Gly91, Arg92, Lys112, Asp124, Gly125, Arg178, and Arg185. Residue Asp262 is the Proton acceptor of the active site. Mg(2+) contacts are provided by Asn263 and Asp272. Asp272 provides a ligand contact to ATP.

The protein belongs to the SELO family. It depends on Mg(2+) as a cofactor. Requires Mn(2+) as cofactor.

The enzyme catalyses L-seryl-[protein] + ATP = 3-O-(5'-adenylyl)-L-seryl-[protein] + diphosphate. The catalysed reaction is L-threonyl-[protein] + ATP = 3-O-(5'-adenylyl)-L-threonyl-[protein] + diphosphate. It catalyses the reaction L-tyrosyl-[protein] + ATP = O-(5'-adenylyl)-L-tyrosyl-[protein] + diphosphate. It carries out the reaction L-histidyl-[protein] + UTP = N(tele)-(5'-uridylyl)-L-histidyl-[protein] + diphosphate. The enzyme catalyses L-seryl-[protein] + UTP = O-(5'-uridylyl)-L-seryl-[protein] + diphosphate. The catalysed reaction is L-tyrosyl-[protein] + UTP = O-(5'-uridylyl)-L-tyrosyl-[protein] + diphosphate. Functionally, nucleotidyltransferase involved in the post-translational modification of proteins. It can catalyze the addition of adenosine monophosphate (AMP) or uridine monophosphate (UMP) to a protein, resulting in modifications known as AMPylation and UMPylation. This chain is Protein nucleotidyltransferase YdiU, found in Trichodesmium erythraeum (strain IMS101).